Reading from the N-terminus, the 203-residue chain is Outer-membrane lipoprotein carrier protein (203 aa).

The first 21 residues, 1–21, serve as a signal peptide directing secretion; that stretch reads MKKQLMTSCLFAAVLAAPAFA.

This sequence belongs to the LolA family. In terms of assembly, monomer.

It is found in the periplasm. Functionally, participates in the translocation of lipoproteins from the inner membrane to the outer membrane. Only forms a complex with a lipoprotein if the residue after the N-terminal Cys is not an aspartate (The Asp acts as a targeting signal to indicate that the lipoprotein should stay in the inner membrane). This Sodalis glossinidius (strain morsitans) protein is Outer-membrane lipoprotein carrier protein.